Reading from the N-terminus, the 518-residue chain is Integrator complex subunit 14 (518 aa).

The region spanning 2-204 (PTVVVMDVSL…KNVQSMFGKL (203 aa)) is the VWFA domain. Mg(2+)-binding residues include Ser-10, Ser-12, and Thr-86. Positions 373-394 (SDAKENPYGDDDNKSPFPLQPK) are disordered. The segment covering 374-386 (DAKENPYGDDDNK) has biased composition (basic and acidic residues).

Belongs to the Integrator subunit 14 family. As to quaternary structure, component of the Integrator complex, composed of core subunits INTS1, INTS2, INTS3, INTS4, INTS5, INTS6, INTS7, INTS8, INTS9/RC74, INTS10, INTS11/CPSF3L, INTS12, INTS13, INTS14 and INTS15. The core complex associates with protein phosphatase 2A subunits PPP2CA and PPP2R1A, to form the Integrator-PP2A (INTAC) complex. INTS14 is part of the tail subcomplex, composed of INTS10, INTS13, INTS14 and INTS15.

The protein resides in the nucleus. In terms of biological role, component of the integrator complex, a multiprotein complex that terminates RNA polymerase II (Pol II) transcription in the promoter-proximal region of genes. The integrator complex provides a quality checkpoint during transcription elongation by driving premature transcription termination of transcripts that are unfavorably configured for transcriptional elongation: the complex terminates transcription by (1) catalyzing dephosphorylation of the C-terminal domain (CTD) of Pol II subunit POLR2A/RPB1 and SUPT5H/SPT5, (2) degrading the exiting nascent RNA transcript via endonuclease activity and (3) promoting the release of Pol II from bound DNA. The integrator complex is also involved in terminating the synthesis of non-coding Pol II transcripts, such as enhancer RNAs (eRNAs), small nuclear RNAs (snRNAs), telomerase RNAs and long non-coding RNAs (lncRNAs). Within the integrator complex, INTS14 is part of the integrator tail module that acts as a platform for the recruitment of transcription factors at promoters. The sequence is that of Integrator complex subunit 14 from Gallus gallus (Chicken).